The chain runs to 464 residues: 3-isopropylmalate dehydratase large subunit (464 aa).

Residues Cys337, Cys397, and Cys400 each contribute to the [4Fe-4S] cluster site.

It belongs to the aconitase/IPM isomerase family. LeuC type 1 subfamily. In terms of assembly, heterodimer of LeuC and LeuD. [4Fe-4S] cluster serves as cofactor.

The catalysed reaction is (2R,3S)-3-isopropylmalate = (2S)-2-isopropylmalate. Its pathway is amino-acid biosynthesis; L-leucine biosynthesis; L-leucine from 3-methyl-2-oxobutanoate: step 2/4. Catalyzes the isomerization between 2-isopropylmalate and 3-isopropylmalate, via the formation of 2-isopropylmaleate. This is 3-isopropylmalate dehydratase large subunit from Bacillus thuringiensis subsp. konkukian (strain 97-27).